The primary structure comprises 73 residues: Small ribosomal subunit protein bS18 (73 aa).

The protein belongs to the bacterial ribosomal protein bS18 family. As to quaternary structure, part of the 30S ribosomal subunit. Forms a tight heterodimer with protein bS6.

Its function is as follows. Binds as a heterodimer with protein bS6 to the central domain of the 16S rRNA, where it helps stabilize the platform of the 30S subunit. This is Small ribosomal subunit protein bS18 from Prochlorococcus marinus subsp. pastoris (strain CCMP1986 / NIES-2087 / MED4).